Reading from the N-terminus, the 123-residue chain is Small ribosomal subunit protein uS12 (123 aa).

Asp89 carries the 3-methylthioaspartic acid modification.

It belongs to the universal ribosomal protein uS12 family. In terms of assembly, part of the 30S ribosomal subunit. Contacts proteins S8 and S17. May interact with IF1 in the 30S initiation complex.

Its function is as follows. With S4 and S5 plays an important role in translational accuracy. Interacts with and stabilizes bases of the 16S rRNA that are involved in tRNA selection in the A site and with the mRNA backbone. Located at the interface of the 30S and 50S subunits, it traverses the body of the 30S subunit contacting proteins on the other side and probably holding the rRNA structure together. The combined cluster of proteins S8, S12 and S17 appears to hold together the shoulder and platform of the 30S subunit. The protein is Small ribosomal subunit protein uS12 of Sinorhizobium medicae (strain WSM419) (Ensifer medicae).